A 1598-amino-acid polypeptide reads, in one-letter code: Pentafunctional AROM polypeptide (1598 aa).

The 3-dehydroquinate synthase stretch occupies residues 1–384 (MGVPTKISIL…YEPRASTVSN (384 aa)). NAD(+) is bound by residues 44-46 (DTN), 81-84 (ESSK), 114-116 (GGV), and Asp119. Arg130 provides a ligand contact to 7-phospho-2-dehydro-3-deoxy-D-arabino-heptonate. Position 139 to 140 (139 to 140 (TT)) interacts with NAD(+). Positions 146 and 152 each coordinate 7-phospho-2-dehydro-3-deoxy-D-arabino-heptonate. Residue Lys161 participates in NAD(+) binding. Asn162 contacts 7-phospho-2-dehydro-3-deoxy-D-arabino-heptonate. NAD(+) contacts are provided by residues 179–182 (FLNT) and Asn190. Glu194 lines the Zn(2+) pocket. 7-phospho-2-dehydro-3-deoxy-D-arabino-heptonate-binding positions include 194–197 (EVIK) and Lys250. The active-site Proton acceptor; for 3-dehydroquinate synthase activity is Glu260. 7-phospho-2-dehydro-3-deoxy-D-arabino-heptonate contacts are provided by residues 264–268 (RNLLN) and His271. His271 contributes to the Zn(2+) binding site. His275 (proton acceptor; for 3-dehydroquinate synthase activity) is an active-site residue. The 7-phospho-2-dehydro-3-deoxy-D-arabino-heptonate site is built by His287 and Lys356. A Zn(2+)-binding site is contributed by His287. The segment at 397–842 (VYPGFPKSLN…WNTLAQTFKV (446 aa)) is EPSP synthase. The active-site For EPSP synthase activity is Cys824. The tract at residues 867–1059 (AASIFIIGMR…RRKENTFFVS (193 aa)) is shikimate kinase. Residue 874-881 (GMRGAGKT) participates in ATP binding. The segment at 1060 to 1280 (LTFPDLTPAS…AAPGQLSARE (221 aa)) is 3-dehydroquinase. His1183 serves as the catalytic Proton acceptor; for 3-dehydroquinate dehydratase activity. Lys1211 acts as the Schiff-base intermediate with substrate; for 3-dehydroquinate dehydratase activity in catalysis. Residues 1293–1598 (AKKFAVIGKP…GVSSSDDTIS (306 aa)) are shikimate dehydrogenase.

This sequence in the N-terminal section; belongs to the sugar phosphate cyclases superfamily. Dehydroquinate synthase family. It in the 2nd section; belongs to the EPSP synthase family. The protein in the 3rd section; belongs to the shikimate kinase family. In the 4th section; belongs to the type-I 3-dehydroquinase family. This sequence in the C-terminal section; belongs to the shikimate dehydrogenase family. In terms of assembly, homodimer. It depends on Zn(2+) as a cofactor.

It is found in the cytoplasm. It catalyses the reaction 7-phospho-2-dehydro-3-deoxy-D-arabino-heptonate = 3-dehydroquinate + phosphate. It carries out the reaction 3-dehydroquinate = 3-dehydroshikimate + H2O. The catalysed reaction is shikimate + NADP(+) = 3-dehydroshikimate + NADPH + H(+). The enzyme catalyses shikimate + ATP = 3-phosphoshikimate + ADP + H(+). It catalyses the reaction 3-phosphoshikimate + phosphoenolpyruvate = 5-O-(1-carboxyvinyl)-3-phosphoshikimate + phosphate. It participates in metabolic intermediate biosynthesis; chorismate biosynthesis; chorismate from D-erythrose 4-phosphate and phosphoenolpyruvate: step 2/7. The protein operates within metabolic intermediate biosynthesis; chorismate biosynthesis; chorismate from D-erythrose 4-phosphate and phosphoenolpyruvate: step 3/7. It functions in the pathway metabolic intermediate biosynthesis; chorismate biosynthesis; chorismate from D-erythrose 4-phosphate and phosphoenolpyruvate: step 4/7. Its pathway is metabolic intermediate biosynthesis; chorismate biosynthesis; chorismate from D-erythrose 4-phosphate and phosphoenolpyruvate: step 5/7. It participates in metabolic intermediate biosynthesis; chorismate biosynthesis; chorismate from D-erythrose 4-phosphate and phosphoenolpyruvate: step 6/7. Functionally, the AROM polypeptide catalyzes 5 consecutive enzymatic reactions in prechorismate polyaromatic amino acid biosynthesis. In Paracoccidioides brasiliensis (strain Pb18), this protein is Pentafunctional AROM polypeptide.